Here is a 470-residue protein sequence, read N- to C-terminus: Argininosuccinate lyase (470 aa).

The protein belongs to the lyase 1 family. Argininosuccinate lyase subfamily.

The protein resides in the cytoplasm. The catalysed reaction is 2-(N(omega)-L-arginino)succinate = fumarate + L-arginine. It functions in the pathway amino-acid biosynthesis; L-arginine biosynthesis; L-arginine from L-ornithine and carbamoyl phosphate: step 3/3. This chain is Argininosuccinate lyase, found in Leptospira borgpetersenii serovar Hardjo-bovis (strain L550).